A 502-amino-acid chain; its full sequence is Cytochrome P450 monooxygenase pyr9 (502 aa).

The helical transmembrane segment at 5–25 (EDASIGTVWVTCLLAVGLYFI) threads the bilayer. 3 N-linked (GlcNAc...) asparagine glycosylation sites follow: Asn-205, Asn-291, and Asn-372. Heme is bound at residue Cys-437.

Belongs to the cytochrome P450 family. Heme serves as cofactor.

It localises to the membrane. Its pathway is secondary metabolite biosynthesis; terpenoid biosynthesis. Its function is as follows. Cytochrome P450 monooxygenase; part of the gene cluster that mediates the biosynthesis of pyripyropene A, a specific human acyl-coenzyme A:cholesterol acyltransferase 2 inhibitor. The first step of the pathway is the synthesis of nicotinyl-CoA from nicotinic acid by the nicotinic acid-CoA ligase pyr1. Nicotinyl-CoA is then a substrate of polyketide synthase pyr2 to produce 4-hydroxy-6-(3-pyridinyl)-2H-pyran-2-one (HPPO) which is further prenylated by the polyprenyl transferase pyr6 to yield farnesyl-HPPO. The next steps consist of an epoxidation of farnesyl-HPPO to epoxyfarnesyl-HPPO by FAD-dependent monooxygenase pyr5 and a cyclization of the terpenoid portion by the terpene cyclase pyr4 to yield deacetyl-pyripyropene E. The 2 cytochrome P450 monooxygenases pyr3 and pyr9, and the 2 acetyltransferases pyr7 and pyr8 are involved in the conversion of deacetyl-pyripyropene E into pyripyropene A through several cycles of oxidation and acetylation steps. Pyr7 acetylates deacetyl-pyripyropene E to pyripyropene E which is oxidized to 11-deacetyl-pyripyropene O by pyr3, which is in turn acetylated into pyripyropene O by pyr8. Pyripyropene O is then oxidized to deacetyl-pyripyropene A by pyr9. Deacetyl-pyripyropene A is finally acetylated to pyripyropene A by pyr8. The chain is Cytochrome P450 monooxygenase pyr9 from Aspergillus fumigatus (strain ATCC MYA-4609 / CBS 101355 / FGSC A1100 / Af293) (Neosartorya fumigata).